The primary structure comprises 267 residues: Orotidine 5'-phosphate decarboxylase (267 aa).

Substrate-binding positions include D37, 59 to 61 (KTH), 91 to 100 (DRKFADIGNT), Y217, and R235. K93 acts as the Proton donor in catalysis.

Belongs to the OMP decarboxylase family.

It catalyses the reaction orotidine 5'-phosphate + H(+) = UMP + CO2. It functions in the pathway pyrimidine metabolism; UMP biosynthesis via de novo pathway; UMP from orotate: step 2/2. The sequence is that of Orotidine 5'-phosphate decarboxylase (URA3) from Eremothecium gossypii (strain ATCC 10895 / CBS 109.51 / FGSC 9923 / NRRL Y-1056) (Yeast).